The primary structure comprises 108 residues: Class I hydrophobin 3 (108 aa).

Positions 1–17 (MFFQTTIVAALASLAVA) are cleaved as a signal peptide. 4 disulfides stabilise this stretch: Cys-28/Cys-87, Cys-35/Cys-81, Cys-36/Cys-69, and Cys-88/Cys-101. Residue Asn-37 is glycosylated (N-linked (GlcNAc...) asparagine).

This sequence belongs to the fungal hydrophobin family. As to quaternary structure, self-assembles to form functional amyloid fibrils called rodlets. Self-assembly into fibrillar rodlets occurs spontaneously at hydrophobic:hydrophilic interfaces and the rodlets further associate laterally to form amphipathic monolayers.

It is found in the secreted. Its subcellular location is the cell wall. Functionally, aerial growth, conidiation, and dispersal of filamentous fungi in the environment rely upon a capability of their secreting small amphipathic proteins called hydrophobins (HPBs) with low sequence identity. Class I can self-assemble into an outermost layer of rodlet bundles on aerial cell surfaces, conferring cellular hydrophobicity that supports fungal growth, development and dispersal; whereas Class II form highly ordered films at water-air interfaces through intermolecular interactions but contribute nothing to the rodlet structure. Vmh3 is a class I hydrophobin that is essential for the maintenance of the surface hydrophobicity of the mycelium and might be involved in the development of fruiting bodies. Plays an important role in hyphal resistance against environmental stress. Necessary for the efficient biodegradation of lignin. The protein is Class I hydrophobin 3 of Pleurotus ostreatus (strain PC15) (Oyster mushroom).